The primary structure comprises 121 residues: Putative iron-sulfur cluster insertion protein ErpA 1 (121 aa).

Iron-sulfur cluster-binding residues include C49, C113, and C115.

This sequence belongs to the HesB/IscA family. Homodimer. It depends on iron-sulfur cluster as a cofactor.

In terms of biological role, required for insertion of 4Fe-4S clusters. The protein is Putative iron-sulfur cluster insertion protein ErpA 1 of Polaromonas naphthalenivorans (strain CJ2).